A 157-amino-acid polypeptide reads, in one-letter code: 3-hydroxyacyl-[acyl-carrier-protein] dehydratase FabZ (157 aa).

Residue histidine 58 is part of the active site.

It belongs to the thioester dehydratase family. FabZ subfamily.

It is found in the cytoplasm. The catalysed reaction is a (3R)-hydroxyacyl-[ACP] = a (2E)-enoyl-[ACP] + H2O. Its function is as follows. Involved in unsaturated fatty acids biosynthesis. Catalyzes the dehydration of short chain beta-hydroxyacyl-ACPs and long chain saturated and unsaturated beta-hydroxyacyl-ACPs. The protein is 3-hydroxyacyl-[acyl-carrier-protein] dehydratase FabZ of Rhizobium rhizogenes (strain K84 / ATCC BAA-868) (Agrobacterium radiobacter).